The primary structure comprises 293 residues: Ribosomal protein L11 methyltransferase (293 aa).

Thr-145, Gly-166, Asp-188, and Asn-230 together coordinate S-adenosyl-L-methionine.

This sequence belongs to the methyltransferase superfamily. PrmA family.

It localises to the cytoplasm. The catalysed reaction is L-lysyl-[protein] + 3 S-adenosyl-L-methionine = N(6),N(6),N(6)-trimethyl-L-lysyl-[protein] + 3 S-adenosyl-L-homocysteine + 3 H(+). In terms of biological role, methylates ribosomal protein L11. The chain is Ribosomal protein L11 methyltransferase from Shewanella piezotolerans (strain WP3 / JCM 13877).